Reading from the N-terminus, the 777-residue chain is Glucocorticoid receptor (777 aa).

The span at 1-14 (MDSKESLTPGKEEN) shows a compositional bias: basic and acidic residues. The segment at 1–23 (MDSKESLTPGKEENPSSVLTQER) is disordered. Residues 1 to 420 (MDSKESLTPG…TATTGPPPKL (420 aa)) form a modulating region. Position 8 is a phosphothreonine (threonine 8). The residue at position 23 (arginine 23) is an Omega-N-methylarginine. Residues serine 45, serine 113, serine 134, and serine 141 each carry the phosphoserine modification. Positions 130-182 (NRSTSVPENPKSSASSSVSAAPKEKEFPKTHSDVSSEQQNLKGQTGTNGGNVK) are disordered. Residues 134 to 150 (SVPENPKSSASSSVSAA) are compositionally biased toward low complexity. Over residues 151 to 163 (PKEKEFPKTHSDV) the composition is skewed to basic and acidic residues. The segment covering 164-174 (SSEQQNLKGQT) has biased composition (polar residues). Phosphoserine occurs at positions 203, 211, and 226. A Glycyl lysine isopeptide (Lys-Gly) (interchain with G-Cter in SUMO2) cross-link involves residue lysine 258. Serine 267 is subject to Phosphoserine. Glycyl lysine isopeptide (Lys-Gly) (interchain with G-Cter in SUMO); alternate cross-links involve residues lysine 277 and lysine 293. Glycyl lysine isopeptide (Lys-Gly) (interchain with G-Cter in SUMO2); alternate cross-links involve residues lysine 277 and lysine 293. A compositionally biased stretch (low complexity) spans 394-414 (SSPSMRPDVSSPPSSSSTATT). Residues 394-415 (SSPSMRPDVSSPPSSSSTATTG) are disordered. At serine 404 the chain carries Phosphoserine. Residue lysine 419 forms a Glycyl lysine isopeptide (Lys-Gly) (interchain with G-Cter in ubiquitin) linkage. 2 NR C4-type zinc fingers span residues 421–441 (CLVC…CGSC) and 457–481 (CAGR…YRKC). A DNA-binding region (nuclear receptor) is located at residues 421-486 (CLVCSDEASG…RYRKCLQAGM (66 aa)). An N6-acetyllysine mark is found at lysine 480, lysine 492, lysine 494, and lysine 495. Residues 485–777 (GMNLEARKTK…NIKKLLFHQK (293 aa)) form an interaction with CLOCK region. The interval 487-523 (NLEARKTKKKIKGIQQATTGVSQETSENPANKTIVPA) is hinge. The region spanning 524–758 (TLPQLTPTLV…FPEMLAEIIT (235 aa)) is the NR LBD domain. The tract at residues 532–697 (LVSLLEVIEP…EIRMTYIKEL (166 aa)) is interaction with CRY1. Lysine 703 participates in a covalent cross-link: Glycyl lysine isopeptide (Lys-Gly) (interchain with G-Cter in SUMO).

The protein belongs to the nuclear hormone receptor family. NR3 subfamily. Heteromultimeric cytoplasmic complex with HSP90AA1, HSPA1A/HSPA1B, and FKBP5 or another immunophilin such as PPID, STIP1, or the immunophilin homolog PPP5C. Upon ligand binding FKBP5 dissociates from the complex and FKBP4 takes its place, thereby linking the complex to dynein and mediating transport to the nucleus, where the complex dissociates. Probably forms a complex composed of chaperones HSP90 and HSP70, co-chaperones CDC37, PPP5C, TSC1 and client protein TSC2, CDK4, AKT, RAF1 and NR3C1; this complex does not contain co-chaperones STIP1/HOP and PTGES3/p23. Directly interacts with UNC45A. Binds to DNA as a homodimer, and as heterodimer with NR3C2 or the retinoid X receptor. Binds STAT5A and STAT5B homodimers and heterodimers. Interacts with NRIP1, POU2F1, POU2F2 and TRIM28. Interacts with several coactivator complexes, including the SMARCA4 complex, CREBBP/EP300, TADA2L (Ada complex) and p160 coactivators such as NCOA2 and NCOA6. Interaction with BAG1 inhibits transactivation. Interacts with HEXIM1 and TGFB1I1. Interacts with NCOA1. Interacts with NCOA3, SMARCA4, SMARCC1, SMARCD1, and SMARCE1. Interacts with CLOCK, CRY1 and CRY2 in a ligand-dependent fashion. Interacts with CIART. Interacts with RWDD3. Interacts with UBE2I/UBC9 and this interaction is enhanced in the presence of RWDD3. Interacts with GRIP1. Interacts with NR4A3 (via nuclear receptor DNA-binding domain), represses transcription activity of NR4A3 on the POMC promoter Nur response element (NurRE). Directly interacts with PNRC2 to attract and form a complex with UPF1 and DCP1A; the interaction leads to rapid mRNA degradation. Interacts with GSK3B. Interacts with FNIP1 and FNIP2. Interacts (via C-terminus) with HNRNPU (via C-terminus). Interacts with MCM3AP. Interacts (via domain NR LBD) with HSP90AA1 and HSP90AB1. In the absence of hormonal ligand, interacts with TACC1. Interacts (via NR LBD domain) with ZNF764 (via KRAB domain); the interaction regulates transcription factor activity of NR3C1 by directing its actions toward certain biologic pathways. In terms of processing, acetylation by CLOCK reduces its binding to glucocorticoid response elements and its transcriptional activity. Increased proteasome-mediated degradation in response to glucocorticoids. Post-translationally, phosphorylated in the absence of hormone; becomes hyperphosphorylated in the presence of glucocorticoid. The Ser-203, Ser-226 and Ser-404-phosphorylated forms are mainly cytoplasmic, and the Ser-211-phosphorylated form is nuclear. Phosphorylation at Ser-211 increases transcriptional activity. Phosphorylation at Ser-203, Ser-226 and Ser-404 decreases signaling capacity. Phosphorylation at Ser-404 may protect from glucocorticoid-induced apoptosis. Phosphorylation at Ser-203 and Ser-211 is not required in regulation of chromosome segregation. May be dephosphorylated by PPP5C, attenuates NR3C1 action. In terms of processing, ubiquitinated by UBR5, leading to its degradation: UBR5 specifically recognizes and binds ligand-bound NR3C1 when it is not associated with coactivators (NCOAs). In presence of NCOAs, the UBR5-degron is not accessible, preventing its ubiquitination and degradation. Sumoylation at Lys-277 and Lys-293 negatively regulates its transcriptional activity. Sumoylation at Lys-703 positively regulates its transcriptional activity in the presence of RWDD3. Sumoylation at Lys-277 and Lys-293 is dispensable whereas sumoylation at Lys-703 is critical for the stimulatory effect of RWDD3 on its transcriptional activity. Heat shock increases sumoylation in a RWWD3-dependent manner.

It localises to the cytoplasm. Its subcellular location is the nucleus. The protein resides in the mitochondrion. The protein localises to the cytoskeleton. It is found in the spindle. It localises to the microtubule organizing center. Its subcellular location is the centrosome. The protein resides in the chromosome. The protein localises to the nucleoplasm. Functionally, receptor for glucocorticoids (GC). Has a dual mode of action: as a transcription factor that binds to glucocorticoid response elements (GRE), both for nuclear and mitochondrial DNA, and as a modulator of other transcription factors. Affects inflammatory responses, cellular proliferation and differentiation in target tissues. Involved in chromatin remodeling. Plays a role in rapid mRNA degradation by binding to the 5' UTR of target mRNAs and interacting with PNRC2 in a ligand-dependent manner which recruits the RNA helicase UPF1 and the mRNA-decapping enzyme DCP1A, leading to RNA decay. Could act as a coactivator for STAT5-dependent transcription upon growth hormone (GH) stimulation and could reveal an essential role of hepatic GR in the control of body growth. Mediates glucocorticoid-induced apoptosis. Promotes accurate chromosome segregation during mitosis. May act as a tumor suppressor. May play a negative role in adipogenesis through the regulation of lipolytic and antilipogenic gene expression. The polypeptide is Glucocorticoid receptor (NR3C1) (Aotus nancymaae (Ma's night monkey)).